We begin with the raw amino-acid sequence, 114 residues long: Flagellar transcriptional regulator FlhD (114 aa).

It belongs to the FlhD family. As to quaternary structure, homodimer; disulfide-linked. Forms a heterohexamer composed of two FlhC and four FlhD subunits. Each FlhC binds a FlhD dimer, forming a heterotrimer, and a hexamer assembles by dimerization of two heterotrimers.

The protein resides in the cytoplasm. Functions in complex with FlhC as a master transcriptional regulator that regulates transcription of several flagellar and non-flagellar operons by binding to their promoter region. Activates expression of class 2 flagellar genes, including fliA, which is a flagellum-specific sigma factor that turns on the class 3 genes. Also regulates genes whose products function in a variety of physiological pathways. The protein is Flagellar transcriptional regulator FlhD of Wigglesworthia glossinidia brevipalpis.